The sequence spans 233 residues: 2-amino-5-formylamino-6-ribosylaminopyrimidin-4(3H)-one 5'-monophosphate deformylase (233 aa).

Residues Glu33, His35, Asp44, and His114 each contribute to the Fe cation site.

Belongs to the creatininase superfamily. FAPy deformylase family. As to quaternary structure, homodimer. The cofactor is Fe(2+). It depends on Zn(2+) as a cofactor.

It catalyses the reaction 2-amino-5-formylamino-6-(5-phospho-D-ribosylamino)pyrimidin-4(3H)-one + H2O = 2,5-diamino-6-(1-D-ribosylamino)pyrimidin-4(3H)-one 5'-phosphate + formate + H(+). The protein operates within cofactor biosynthesis; coenzyme F420 biosynthesis. Its pathway is cofactor biosynthesis; riboflavin biosynthesis. Catalyzes the hydrolysis of the formamide of 2-amino-5-formylamino-6-ribosylamino-4(3H)-pyrimidinone 5'-monophosphate (FAPy) to form 2,5-diamino-6-ribosylamino-4(3H)-pyrimidinone 5'-phosphate (APy). This Methanosphaera stadtmanae (strain ATCC 43021 / DSM 3091 / JCM 11832 / MCB-3) protein is 2-amino-5-formylamino-6-ribosylaminopyrimidin-4(3H)-one 5'-monophosphate deformylase.